Here is a 586-residue protein sequence, read N- to C-terminus: MCGILAVLGCSDFTQAKRVRVLELSRRLKHRGPDWSGLHQHGDCYLAHQRLAIVDPASGDQPLFNEDKSIIVTVNGEIYNHEELRKQLPNHQFRTGSDCDVIAHLYEEHGENFMDMLDGIFSFVLLDTRDNTFIVARDAIGVTSLYIGWGLDGSVWISSEMKGLNDDCEHFEVFPPGHLYSSRERAFRRWYNPTWFSESIPSAPYDPLAVRHAFEKAVIKRLMTDVPFGVLLSGGLDSSLVASITSRYLATTKAAEQWGSKLHSFCVGLEGSPDLKAAKEVADYLGTVHHEFTFTVQDGIDAIEEVIYHVETYDVTTIRASTPMFLMSRKIKSLGVKWVISGEGSDEIFGGYLYFHKAPNKEEFHTETCRKIKALHQYDCLRANKSTFAWGLEARVPFLDKEFINVAMNIDPEYKMIKRDEGRIEKYILRRAFDDEEKPYLPKHILYRQKEQFSDGVGYSWIDGLKDHAAKHVTDKMILNAGNIFRHNTPLTKEAYYYRMIFERFFPQNSARLTVPGGPTVACSTAKAVEWDAAWSNNLDPSGRAALGVHLSAYDDKQNNLINNKPVEFEKLIPMEAPSLGVAIHS.

C2 functions as the For GATase activity in the catalytic mechanism. Residues 2 to 185 (CGILAVLGCS…PGHLYSSRER (184 aa)) enclose the Glutamine amidotransferase type-2 domain. L-glutamine-binding positions include 50–54 (RLAIV), 75–77 (NGE), and D98. The region spanning 193–516 (PTWFSESIPS…PQNSARLTVP (324 aa)) is the Asparagine synthetase domain. Residues L231, V267, and 341–342 (SG) each bind ATP.

The catalysed reaction is L-aspartate + L-glutamine + ATP + H2O = L-asparagine + L-glutamate + AMP + diphosphate + H(+). Its pathway is amino-acid biosynthesis; L-asparagine biosynthesis; L-asparagine from L-aspartate (L-Gln route): step 1/1. This Lotus japonicus (Lotus corniculatus var. japonicus) protein is Asparagine synthetase [glutamine-hydrolyzing] 1 (AS1).